Consider the following 443-residue polypeptide: D-alanyl-D-alanine carboxypeptidase DacA (443 aa).

The N-terminal stretch at 1 to 31 (MNIKKCKQLLMSLVVLTLAVTCLAPMSKAKA) is a signal peptide. Ser67 serves as the catalytic Acyl-ester intermediate. Lys70 acts as the Proton acceptor in catalysis. The active site involves Ser131. Lys258 is a substrate binding site.

Belongs to the peptidase S11 family.

The protein resides in the secreted. Its subcellular location is the cell wall. It localises to the cell membrane. The protein localises to the membrane raft. The enzyme catalyses Preferential cleavage: (Ac)2-L-Lys-D-Ala-|-D-Ala. Also transpeptidation of peptidyl-alanyl moieties that are N-acyl substituents of D-alanine.. Its pathway is cell wall biogenesis; peptidoglycan biosynthesis. Its function is as follows. Removes C-terminal D-alanyl residues from sugar-peptide cell wall precursors. This chain is D-alanyl-D-alanine carboxypeptidase DacA (dacA), found in Bacillus subtilis (strain 168).